We begin with the raw amino-acid sequence, 278 residues long: Thiazole synthase (278 aa).

Catalysis depends on Lys-109, which acts as the Schiff-base intermediate with DXP. Residues Gly-170, 197-198 (AG), and 219-220 (NT) contribute to the 1-deoxy-D-xylulose 5-phosphate site.

The protein belongs to the ThiG family. As to quaternary structure, homotetramer. Forms heterodimers with either ThiH or ThiS.

Its subcellular location is the cytoplasm. It carries out the reaction [ThiS sulfur-carrier protein]-C-terminal-Gly-aminoethanethioate + 2-iminoacetate + 1-deoxy-D-xylulose 5-phosphate = [ThiS sulfur-carrier protein]-C-terminal Gly-Gly + 2-[(2R,5Z)-2-carboxy-4-methylthiazol-5(2H)-ylidene]ethyl phosphate + 2 H2O + H(+). It participates in cofactor biosynthesis; thiamine diphosphate biosynthesis. Functionally, catalyzes the rearrangement of 1-deoxy-D-xylulose 5-phosphate (DXP) to produce the thiazole phosphate moiety of thiamine. Sulfur is provided by the thiocarboxylate moiety of the carrier protein ThiS. In vitro, sulfur can be provided by H(2)S. This Cupriavidus taiwanensis (strain DSM 17343 / BCRC 17206 / CCUG 44338 / CIP 107171 / LMG 19424 / R1) (Ralstonia taiwanensis (strain LMG 19424)) protein is Thiazole synthase.